Here is a 214-residue protein sequence, read N- to C-terminus: Ras-related protein RABA5c (214 aa).

19–26 provides a ligand contact to GTP; that stretch reads GDSAVGKS. The Effector region signature appears at 41–49; that stretch reads SKATIGVEF. Residues 67–71, 125–128, and 155–156 each bind GTP; these read DTAGQ, NKCD, and SA. S-geranylgeranyl cysteine attachment occurs at residues C211 and C212.

Belongs to the small GTPase superfamily. Rab family. In terms of assembly, interacts (via C-terminus) with GDI1. Interacts with PUX8/SAY1. Expressed in roots and actively dividing cells.

The protein resides in the golgi apparatus membrane. It localises to the golgi apparatus. The protein localises to the trans-Golgi network membrane. Its subcellular location is the cell membrane. Its function is as follows. Intracellular vesicle trafficking and protein transport. Binds GTP and GDP and possesses intrinsic GTPase activity. This chain is Ras-related protein RABA5c (RABA5C), found in Arabidopsis thaliana (Mouse-ear cress).